A 278-amino-acid chain; its full sequence is MNPNSNSITKSHLFHIVNPSPWPILTSFALLLLVIGGISSMHGYKFNMYILSAGVISVIYCLYSWWRDVVQEGIVEHQHTSPVRKGLKIGMVLFILTETVFFSVFFASFLKSSISPVGILDGVWVVKQGIWPPPTIKTFDPFDIPFINTLILLLSGTTITGAHYALEEKNQKDCVTALAFTIVLGIFFTLMQVYEYYHAEFKFTDGIYASNFYLATGFHGAHVVIGTIFLIVCYFRAKRGDFTTEGNGHLGFEFAAWYWHFVDVVWLFLFTFVYILGS.

6 helical membrane-spanning segments follow: residues 21-41, 46-66, 89-109, 174-194, 212-232, and 256-276; these read PWPI…ISSM, FNMY…YSWW, IGMV…FASF, CVTA…MQVY, FYLA…FLIV, and AWYW…VYIL.

Belongs to the cytochrome c oxidase subunit 3 family.

Its subcellular location is the cell membrane. It carries out the reaction 4 Fe(II)-[cytochrome c] + O2 + 8 H(+)(in) = 4 Fe(III)-[cytochrome c] + 2 H2O + 4 H(+)(out). The chain is Probable cytochrome c oxidase subunit 3 (ctaE) from Rickettsia prowazekii (strain Madrid E).